The sequence spans 428 residues: Transcription factor bHLH91 (428 aa).

The 50-residue stretch at 210 to 259 (KRKNKPFTTERERRCHLNERYEALKLLIPSPSKGDRASILQDGIDYINEL) folds into the bHLH domain. Positions 278–320 (RHKNNEVDDNNNNKNLDDHGNEDDDDDDENMEKKPESDVIDQC) are disordered. A compositionally biased stretch (acidic residues) spans 297 to 307 (GNEDDDDDDEN).

In terms of assembly, homodimer. In terms of tissue distribution, flowers.

The protein localises to the nucleus. The sequence is that of Transcription factor bHLH91 (BHLH91) from Arabidopsis thaliana (Mouse-ear cress).